We begin with the raw amino-acid sequence, 611 residues long: Lanthanide-dependent methanol dehydrogenase (611 aa).

The first 34 residues, 1-34 (MTVKLKKPKKYAVAKNATLLAAFGLIGSLSLAKA), serve as a signal peptide directing secretion. A disulfide bond links Cys-138 and Cys-139. 5 residues coordinate pyrroloquinoline quinone: Arg-144, Thr-188, Ser-203, Gly-204, and Gly-205. Glu-206 is a Ce(3+) binding site. Glu-206 is a binding site for Eu(3+). Pyrroloquinoline quinone contacts are provided by Thr-270 and Trp-272. 3 residues coordinate Ce(3+): Asn-290, Asp-333, and Asp-335. Eu(3+) is bound by residues Asn-290, Asp-333, and Asp-335. Arg-360 provides a ligand contact to pyrroloquinoline quinone. A disulfide bond links Cys-414 and Cys-443. Pyrroloquinoline quinone is bound by residues Trp-501 and Trp-566.

This sequence belongs to the bacterial PQQ dehydrogenase family. As to quaternary structure, homodimer. Ce(3+) is required as a cofactor. It depends on La(3+) as a cofactor. The cofactor is Nd(3+). Requires Pr(3+) as cofactor. Eu(3+) serves as cofactor. Pyrroloquinoline quinone is required as a cofactor.

It is found in the periplasm. The catalysed reaction is 2 Fe(III)-[cytochrome cL] + methanol = 2 Fe(II)-[cytochrome cL] + formaldehyde + 2 H(+). The enzyme catalyses 4 Fe(III)-[cytochrome cL] + methanol + H2O = 4 Fe(II)-[cytochrome cL] + formate + 5 H(+). It carries out the reaction 2 Fe(III)-[cytochrome cL] + a primary alcohol = 2 Fe(II)-[cytochrome cL] + an aldehyde + 2 H(+). It participates in one-carbon metabolism; methanol degradation. Its function is as follows. Catalyzes the oxidation of methanol to formaldehyde or formate in the presence of lanthanides (Ln). Is a key enzyme in methane/methanol metabolism, allowing M.fumariolicum to grow on methane as the sole carbon and energy source. Can also act on other primary alcohols in vitro, such as ethanol, 1-propanol, 1-butanol, and 1-hexanol, but is not able to oxidize secondary alcohols and acetaldehyde. Uses a specific cytochrome cL, encoded by the adjacent gene in the locus, as electron acceptor. The chain is Lanthanide-dependent methanol dehydrogenase from Methylacidiphilum fumariolicum (strain SolV).